The primary structure comprises 150 residues: Catabolic 3-dehydroquinase 2 (150 aa).

Residue tyrosine 23 is the Proton acceptor of the active site. Substrate-binding residues include asparagine 74, histidine 80, and aspartate 87. Histidine 100 (proton donor) is an active-site residue. Residues 101-102 and arginine 111 contribute to the substrate site; that span reads IT.

This sequence belongs to the type-II 3-dehydroquinase family. In terms of assembly, homododecamer. Adopts a ring-like structure, composed of an arrangement of two hexameric rings stacked on top of one another.

The catalysed reaction is 3-dehydroquinate = 3-dehydroshikimate + H2O. Its pathway is aromatic compound metabolism; 3,4-dihydroxybenzoate biosynthesis; 3,4-dihydroxybenzoate from 3-dehydroquinate: step 1/2. Functionally, is involved in the catabolism of quinate. Allows the utilization of quinate as carbon source via the beta-ketoadipate pathway. The protein is Catabolic 3-dehydroquinase 2 of Neosartorya fischeri (strain ATCC 1020 / DSM 3700 / CBS 544.65 / FGSC A1164 / JCM 1740 / NRRL 181 / WB 181) (Aspergillus fischerianus).